The chain runs to 428 residues: tRNA(Ile)-lysidine synthase (428 aa).

28-33 (SGGVDS) serves as a coordination point for ATP.

The protein belongs to the tRNA(Ile)-lysidine synthase family.

It localises to the cytoplasm. The enzyme catalyses cytidine(34) in tRNA(Ile2) + L-lysine + ATP = lysidine(34) in tRNA(Ile2) + AMP + diphosphate + H(+). Its function is as follows. Ligates lysine onto the cytidine present at position 34 of the AUA codon-specific tRNA(Ile) that contains the anticodon CAU, in an ATP-dependent manner. Cytidine is converted to lysidine, thus changing the amino acid specificity of the tRNA from methionine to isoleucine. In Streptococcus pyogenes serotype M3 (strain ATCC BAA-595 / MGAS315), this protein is tRNA(Ile)-lysidine synthase.